Here is a 55-residue protein sequence, read N- to C-terminus: ATP synthase F(0) complex subunit 8 (55 aa).

A helical membrane pass occupies residues 9-29 (WFAIMVFSWFVFLIFLPPKIM).

Belongs to the ATPase protein 8 family. In terms of assembly, component of the ATP synthase complex composed at least of ATP5F1A/subunit alpha, ATP5F1B/subunit beta, ATP5MC1/subunit c (homooctomer), MT-ATP6/subunit a, MT-ATP8/subunit 8, ATP5ME/subunit e, ATP5MF/subunit f, ATP5MG/subunit g, ATP5MK/subunit k, ATP5MJ/subunit j, ATP5F1C/subunit gamma, ATP5F1D/subunit delta, ATP5F1E/subunit epsilon, ATP5PF/subunit F6, ATP5PB/subunit b, ATP5PD/subunit d, ATP5PO/subunit OSCP. ATP synthase complex consists of a soluble F(1) head domain (subunits alpha(3) and beta(3)) - the catalytic core - and a membrane F(0) domain - the membrane proton channel (subunits c, a, 8, e, f, g, k and j). These two domains are linked by a central stalk (subunits gamma, delta, and epsilon) rotating inside the F1 region and a stationary peripheral stalk (subunits F6, b, d, and OSCP).

It is found in the mitochondrion membrane. Subunit 8, of the mitochondrial membrane ATP synthase complex (F(1)F(0) ATP synthase or Complex V) that produces ATP from ADP in the presence of a proton gradient across the membrane which is generated by electron transport complexes of the respiratory chain. ATP synthase complex consist of a soluble F(1) head domain - the catalytic core - and a membrane F(1) domain - the membrane proton channel. These two domains are linked by a central stalk rotating inside the F(1) region and a stationary peripheral stalk. During catalysis, ATP synthesis in the catalytic domain of F(1) is coupled via a rotary mechanism of the central stalk subunits to proton translocation. In vivo, can only synthesize ATP although its ATP hydrolase activity can be activated artificially in vitro. Part of the complex F(0) domain. In Tetraodon nigroviridis (Spotted green pufferfish), this protein is ATP synthase F(0) complex subunit 8.